A 302-amino-acid polypeptide reads, in one-letter code: UPF0725 protein At1g23960 (302 aa).

Alanine 2 carries the N-acetylalanine modification.

The protein belongs to the UPF0725 (EMB2204) family.

The sequence is that of UPF0725 protein At1g23960 from Arabidopsis thaliana (Mouse-ear cress).